The chain runs to 331 residues: MSLPLRLALLPTLLASASAFAACPAPPPGQPDIRAIGYYTDKAGSVIDPALQQQNKDATAPLDRYAADVARMSDDYLRNGDPAAAQCTLSWLGAWADDGAMLGQMIRVNNDQSFYMRQWMLDAVAMAYLKVHDQANPQQRARIDPWLQKLARANLAYWDNPKRRRNNHYYWGGLGVLATGLATDDDALWQAGHAAFQKGIDDIQDDGSLPLEMARGQRALHYHDYALAPLVMMAELARLRGQDWYASRNHAIDRLARRVIEGSRDPAWFNQHTGAAQLPLQASGWVEFYRLRSPDGGVFDAAHARGPFHSPRLGGDLTLMATHGIVRTPLR.

Residues 1–22 (MSLPLRLALLPTLLASASAFAA) form the signal peptide. The N-palmitoyl cysteine moiety is linked to residue Cys-23. Cys-23 carries the S-diacylglycerol cysteine lipid modification.

Belongs to the polysaccharide lyase 5 family.

It localises to the cell outer membrane. It catalyses the reaction Eliminative cleavage of alginate to give oligosaccharides with 4-deoxy-alpha-L-erythro-hex-4-enuronosyl groups at their non-reducing ends and beta-D-mannuronate at their reducing end.. The enzyme catalyses [hyaluronan](n) = n 3-(4-deoxy-beta-D-gluc-4-enuronosyl)-N-acetyl-D-glucosamine + H2O. The catalysed reaction is Eliminative cleavage of (1-&gt;4)-beta-D-glucuronans to give oligosaccharides with 4-deoxy-beta-D-gluc-4-enuronosyl groups at their non-reducing ends. Complete degradation of glucuronans results in the formation of tetrasaccharides.. Its activity is regulated as follows. Is inhibited by mono- and divalent cations as well as L-ascorbic acid 6-hexadecanoate. In terms of biological role, polysaccharide lyase that catalyzes the depolymerization of several anionic polysaccharides via a beta-elimination mechanism. Exhibits broad substrate specificity, catalyzing the degradation of not only alginate and poly-beta-D-mannuronate (poly-ManA), but poly-beta-D-glucuronate (poly-GlcA or poly-GlcUA) and hyaluronate (HA) as well. The oligosaccharide products formed by enzymatic cleavage are comprised mainly of disaccharides, with a lower abundance of trimers and pentamers. Is not active on poly-D-galacturonate, heparin and heparin sulfate. The polypeptide is Polysaccharide lyase (Stenotrophomonas maltophilia (strain K279a)).